We begin with the raw amino-acid sequence, 264 residues long: S-adenosylmethionine decarboxylase proenzyme (264 aa).

The Schiff-base intermediate with substrate; via pyruvic acid role is filled by Ser-113. Pyruvic acid (Ser); by autocatalysis is present on Ser-113. The active-site Proton acceptor; for processing activity is His-118. Cys-141 acts as the Proton donor; for catalytic activity in catalysis.

Belongs to the prokaryotic AdoMetDC family. Type 2 subfamily. Heterooctamer of four alpha and four beta chains arranged as a tetramer of alpha/beta heterodimers. The cofactor is pyruvate. In terms of processing, is synthesized initially as an inactive proenzyme. Formation of the active enzyme involves a self-maturation process in which the active site pyruvoyl group is generated from an internal serine residue via an autocatalytic post-translational modification. Two non-identical subunits are generated from the proenzyme in this reaction, and the pyruvate is formed at the N-terminus of the alpha chain, which is derived from the carboxyl end of the proenzyme. The post-translation cleavage follows an unusual pathway, termed non-hydrolytic serinolysis, in which the side chain hydroxyl group of the serine supplies its oxygen atom to form the C-terminus of the beta chain, while the remainder of the serine residue undergoes an oxidative deamination to produce ammonia and the pyruvoyl group blocking the N-terminus of the alpha chain.

It catalyses the reaction S-adenosyl-L-methionine + H(+) = S-adenosyl 3-(methylsulfanyl)propylamine + CO2. It functions in the pathway amine and polyamine biosynthesis; S-adenosylmethioninamine biosynthesis; S-adenosylmethioninamine from S-adenosyl-L-methionine: step 1/1. Catalyzes the decarboxylation of S-adenosylmethionine to S-adenosylmethioninamine (dcAdoMet), the propylamine donor required for the synthesis of the polyamines spermine and spermidine from the diamine putrescine. This Stenotrophomonas maltophilia (strain K279a) protein is S-adenosylmethionine decarboxylase proenzyme.